A 970-amino-acid polypeptide reads, in one-letter code: Glycine dehydrogenase (decarboxylating) (970 aa).

N6-(pyridoxal phosphate)lysine is present on K723.

It belongs to the GcvP family. In terms of assembly, the glycine cleavage system is composed of four proteins: P, T, L and H. The cofactor is pyridoxal 5'-phosphate.

The catalysed reaction is N(6)-[(R)-lipoyl]-L-lysyl-[glycine-cleavage complex H protein] + glycine + H(+) = N(6)-[(R)-S(8)-aminomethyldihydrolipoyl]-L-lysyl-[glycine-cleavage complex H protein] + CO2. Functionally, the glycine cleavage system catalyzes the degradation of glycine. The P protein binds the alpha-amino group of glycine through its pyridoxal phosphate cofactor; CO(2) is released and the remaining methylamine moiety is then transferred to the lipoamide cofactor of the H protein. The sequence is that of Glycine dehydrogenase (decarboxylating) from Burkholderia pseudomallei (strain 1106a).